Consider the following 143-residue polypeptide: Mediator of RNA polymerase II transcription subunit 21 (143 aa).

Positions 53-130 (KEFEKNIDEL…KVRTLTQDFT (78 aa)) form a coiled coil.

It belongs to the Mediator complex subunit 21 family. In terms of assembly, component of the Mediator complex.

The protein localises to the nucleus. Functionally, component of the Mediator complex, a coactivator involved in the regulated transcription of nearly all RNA polymerase II-dependent genes. Mediator functions as a bridge to convey information from gene-specific regulatory proteins to the basal RNA polymerase II transcription machinery. Mediator is recruited to promoters by direct interactions with regulatory proteins and serves as a scaffold for the assembly of a functional preinitiation complex with RNA polymerase II and the general transcription factors. The protein is Mediator of RNA polymerase II transcription subunit 21 (SRB7) of Kluyveromyces lactis (strain ATCC 8585 / CBS 2359 / DSM 70799 / NBRC 1267 / NRRL Y-1140 / WM37) (Yeast).